A 326-amino-acid polypeptide reads, in one-letter code: Protein phosphatase PTC7 homolog fig (326 aa).

A disordered region spans residues 40 to 83 (VQGKSKPRSPHLTSPQCSPEHRPRRFRPPSASGRTAFSSAPRPK). The PPM-type phosphatase domain maps to 64 to 314 (RFRPPSASGR…DDITVVLASV (251 aa)). Positions 91, 92, and 236 each coordinate Mn(2+).

The protein belongs to the PP2C family. It depends on Mg(2+) as a cofactor. Mn(2+) is required as a cofactor.

The catalysed reaction is O-phospho-L-seryl-[protein] + H2O = L-seryl-[protein] + phosphate. It catalyses the reaction O-phospho-L-threonyl-[protein] + H2O = L-threonyl-[protein] + phosphate. The sequence is that of Protein phosphatase PTC7 homolog fig from Drosophila persimilis (Fruit fly).